The primary structure comprises 428 residues: Adenylosuccinate synthetase (428 aa).

Residues 12–18 (GDEGKGK) and 40–42 (GHT) contribute to the GTP site. The active-site Proton acceptor is the Asp-13. Residues Asp-13 and Gly-40 each coordinate Mg(2+). IMP contacts are provided by residues 13-16 (DEGK), 38-41 (NAGH), Thr-130, Arg-144, Gln-225, Thr-240, and Arg-304. The Proton donor role is filled by His-41. 300–306 (VTTGRAR) provides a ligand contact to substrate. GTP-binding positions include Arg-306, 332 to 334 (KID), and 414 to 416 (SVG).

The protein belongs to the adenylosuccinate synthetase family. As to quaternary structure, homodimer. It depends on Mg(2+) as a cofactor.

The protein resides in the cytoplasm. The catalysed reaction is IMP + L-aspartate + GTP = N(6)-(1,2-dicarboxyethyl)-AMP + GDP + phosphate + 2 H(+). The protein operates within purine metabolism; AMP biosynthesis via de novo pathway; AMP from IMP: step 1/2. In terms of biological role, plays an important role in the de novo pathway of purine nucleotide biosynthesis. Catalyzes the first committed step in the biosynthesis of AMP from IMP. In Clostridium botulinum (strain 657 / Type Ba4), this protein is Adenylosuccinate synthetase.